Consider the following 176-residue polypeptide: 3-hydroxyanthranilate 3,4-dioxygenase (176 aa).

Arg-44 contributes to the O2 binding site. Fe cation is bound by residues His-48, Glu-54, and His-92. Position 54 (Glu-54) interacts with substrate. Positions 96 and 106 each coordinate substrate. Residues Cys-121, Cys-124, Cys-158, and Cys-161 each contribute to the Fe cation site.

This sequence belongs to the 3-HAO family. Homodimer. Fe(2+) serves as cofactor.

The enzyme catalyses 3-hydroxyanthranilate + O2 = (2Z,4Z)-2-amino-3-carboxymuconate 6-semialdehyde. Its pathway is cofactor biosynthesis; NAD(+) biosynthesis; quinolinate from L-kynurenine: step 3/3. Its function is as follows. Catalyzes the oxidative ring opening of 3-hydroxyanthranilate to 2-amino-3-carboxymuconate semialdehyde, which spontaneously cyclizes to quinolinate. The sequence is that of 3-hydroxyanthranilate 3,4-dioxygenase from Xanthomonas campestris pv. campestris (strain B100).